A 353-amino-acid polypeptide reads, in one-letter code: Uroporphyrinogen decarboxylase (353 aa).

Substrate-binding positions include 26–30 (RQAGR), Asp76, Tyr153, Thr208, and His326.

It belongs to the uroporphyrinogen decarboxylase family. As to quaternary structure, homodimer.

The protein localises to the cytoplasm. The catalysed reaction is uroporphyrinogen III + 4 H(+) = coproporphyrinogen III + 4 CO2. It participates in porphyrin-containing compound metabolism; protoporphyrin-IX biosynthesis; coproporphyrinogen-III from 5-aminolevulinate: step 4/4. In terms of biological role, catalyzes the decarboxylation of four acetate groups of uroporphyrinogen-III to yield coproporphyrinogen-III. This chain is Uroporphyrinogen decarboxylase, found in Chromohalobacter salexigens (strain ATCC BAA-138 / DSM 3043 / CIP 106854 / NCIMB 13768 / 1H11).